A 179-amino-acid polypeptide reads, in one-letter code: Ribosome maturation factor RimM (179 aa).

The PRC barrel domain occupies 96–175 (KDEYFWFDIE…IITVIGAMDI (80 aa)).

Belongs to the RimM family. In terms of assembly, binds ribosomal protein uS19.

Its subcellular location is the cytoplasm. An accessory protein needed during the final step in the assembly of 30S ribosomal subunit, possibly for assembly of the head region. Essential for efficient processing of 16S rRNA. May be needed both before and after RbfA during the maturation of 16S rRNA. It has affinity for free ribosomal 30S subunits but not for 70S ribosomes. This Sulfurimonas denitrificans (strain ATCC 33889 / DSM 1251) (Thiomicrospira denitrificans (strain ATCC 33889 / DSM 1251)) protein is Ribosome maturation factor RimM.